Consider the following 445-residue polypeptide: Trigger factor (445 aa).

Residues 162 to 247 enclose the PPIase FKBP-type domain; that stretch reads GDQVTIDAIG…IKAVHTAEPT (86 aa).

This sequence belongs to the FKBP-type PPIase family. Tig subfamily.

The protein resides in the cytoplasm. The catalysed reaction is [protein]-peptidylproline (omega=180) = [protein]-peptidylproline (omega=0). Its function is as follows. Involved in protein export. Acts as a chaperone by maintaining the newly synthesized protein in an open conformation. Functions as a peptidyl-prolyl cis-trans isomerase. The polypeptide is Trigger factor (tig) (Rickettsia prowazekii (strain Madrid E)).